A 115-amino-acid chain; its full sequence is Ribosome-binding factor A (115 aa).

The protein belongs to the RbfA family. As to quaternary structure, monomer. Binds 30S ribosomal subunits, but not 50S ribosomal subunits or 70S ribosomes.

Its subcellular location is the cytoplasm. In terms of biological role, one of several proteins that assist in the late maturation steps of the functional core of the 30S ribosomal subunit. Associates with free 30S ribosomal subunits (but not with 30S subunits that are part of 70S ribosomes or polysomes). Required for efficient processing of 16S rRNA. May interact with the 5'-terminal helix region of 16S rRNA. The protein is Ribosome-binding factor A of Streptococcus gordonii (strain Challis / ATCC 35105 / BCRC 15272 / CH1 / DL1 / V288).